The chain runs to 233 residues: Isoprenyl transferase (233 aa).

Asp12 is a catalytic residue. Asp12 contributes to the Mg(2+) binding site. Residues 13-16, Trp17, Arg25, His29, and 57-59 each bind substrate; these read GNGR and STE. Asn60 (proton acceptor) is an active-site residue. Residues Trp61, Arg63, Arg178, and 184–186 contribute to the substrate site; that span reads RLS. A Mg(2+)-binding site is contributed by Glu197.

This sequence belongs to the UPP synthase family. Homodimer. Requires Mg(2+) as cofactor.

In terms of biological role, catalyzes the condensation of isopentenyl diphosphate (IPP) with allylic pyrophosphates generating different type of terpenoids. This Thermotoga maritima (strain ATCC 43589 / DSM 3109 / JCM 10099 / NBRC 100826 / MSB8) protein is Isoprenyl transferase.